Reading from the N-terminus, the 240-residue chain is Zinc import ATP-binding protein ZnuC (240 aa).

Positions Met1 to Asp219 constitute an ABC transporter domain. Gly36–Thr43 lines the ATP pocket.

It belongs to the ABC transporter superfamily. Zinc importer (TC 3.A.1.15.5) family. In terms of assembly, the complex is composed of two ATP-binding proteins (ZnuC), two transmembrane proteins (ZnuB) and a solute-binding protein (ZnuA).

Its subcellular location is the cell inner membrane. It catalyses the reaction Zn(2+)(out) + ATP(in) + H2O(in) = Zn(2+)(in) + ADP(in) + phosphate(in) + H(+)(in). Its function is as follows. Part of the ABC transporter complex ZnuABC involved in zinc import. Responsible for energy coupling to the transport system. In Chromohalobacter salexigens (strain ATCC BAA-138 / DSM 3043 / CIP 106854 / NCIMB 13768 / 1H11), this protein is Zinc import ATP-binding protein ZnuC.